We begin with the raw amino-acid sequence, 131 residues long: Large ribosomal subunit protein bL17 (131 aa).

The protein belongs to the bacterial ribosomal protein bL17 family. Part of the 50S ribosomal subunit. Contacts protein L32.

This is Large ribosomal subunit protein bL17 from Vesicomyosocius okutanii subsp. Calyptogena okutanii (strain HA).